The following is a 396-amino-acid chain: Capsular polysaccharide biosynthesis protein CapF (396 aa).

Helical transmembrane passes span 7 to 27, 41 to 61, 74 to 94, 101 to 121, 129 to 149, 153 to 173, 198 to 218, 232 to 252, 279 to 299, 315 to 335, 351 to 371, and 372 to 392; these read YMFV…LVIV, ALVI…SVIV, AILS…YVLG, ILIV…YGIY, LLGI…YIIY, HNLN…FAII, IFIL…NTGI, LGIF…ANSI, MVFI…FLGE, IILI…FLGT, LILL…YSLL, and GAAL…YYFY.

It belongs to the polysaccharide synthase family.

It is found in the cell membrane. Its pathway is capsule biogenesis; capsule polysaccharide biosynthesis. Functionally, required for the biosynthesis of type 1 capsular polysaccharide. This chain is Capsular polysaccharide biosynthesis protein CapF (capF), found in Staphylococcus aureus.